A 596-amino-acid polypeptide reads, in one-letter code: MWLQAICIYTVFIIIGCGIPTAAEEHSLWRWTCENNRCTKIRNEPENKEPVLSLEACKMFCDDYGLLWPKPTIETNLGNFLSKINMNTIDIQITKQGKSDDLLTAAADRFKTLVSSSVPKGFSAKAAGKSVTVYLVNENPYIREFSLDMDESYELYISSTSSDKVNATIRGNSFFGVRNGLETLSQLIVYDDIRNNLLIVRDVTIKDRPVYPYRGILLDTARNFYSIDSIKRTIDAMAAVKLNTFHWHITDSQSFPLVLQKRPNLSKLGAYSPTKVYTKQDIREVVEYGLERGVRVLPEFDAPAHVGEGWQDTGLTVCFKAEPWTKFCVEPPCGQLNPTKEELYDYLEDIYVEMAEAFESTDMFHMGGDEVSERCWNSSEEIQNFMIQNRWNLDKSSFLKLWNYFQKNAQDRAYKAFGKRLPLILWTSTLTDYTHVEKFLDKDEYIIQVWTTGADPQIQGLLQKGYRLIMSNYDALYFDCGFGAWVGSGNNWCSPYIGGQKVYGNSPAVMALSYRDQILGGEVALWSEQSDPATLDGRLWPRAAAFAERMWAEPSTAWQDAEHRMLHVRERLVRMGIQAESLEPEWCYQNQGLCYG.

Positions 1 to 23 (MWLQAICIYTVFIIIGCGIPTAA) are cleaved as a signal peptide. Residues N166, N264, and N377 are each glycosylated (N-linked (GlcNAc...) asparagine).

It belongs to the glycosyl hydrolase 20 family.

The enzyme catalyses Hydrolysis of terminal non-reducing N-acetyl-D-hexosamine residues in N-acetyl-beta-D-hexosaminides.. In terms of biological role, active during metamorphosis to degrade chitin. This is Chitooligosaccharidolytic beta-N-acetylglucosaminidase from Bombyx mori (Silk moth).